The chain runs to 406 residues: Cysteine desulfurase (406 aa).

Lys226 carries the N6-(pyridoxal phosphate)lysine modification. Residue Cys364 is the Cysteine persulfide intermediate of the active site.

It belongs to the class-V pyridoxal-phosphate-dependent aminotransferase family. Csd subfamily. Homodimer. Interacts with SufE and the SufBCD complex composed of SufB, SufC and SufD. The interaction with SufE is required to mediate the direct transfer of the sulfur atom from the S-sulfanylcysteine. Pyridoxal 5'-phosphate is required as a cofactor.

It is found in the cytoplasm. The catalysed reaction is (sulfur carrier)-H + L-cysteine = (sulfur carrier)-SH + L-alanine. It carries out the reaction L-selenocysteine + AH2 = hydrogenselenide + L-alanine + A + H(+). It functions in the pathway cofactor biosynthesis; iron-sulfur cluster biosynthesis. Its function is as follows. Cysteine desulfurases mobilize the sulfur from L-cysteine to yield L-alanine, an essential step in sulfur metabolism for biosynthesis of a variety of sulfur-containing biomolecules. Component of the suf operon, which is activated and required under specific conditions such as oxidative stress and iron limitation. Acts as a potent selenocysteine lyase in vitro, that mobilizes selenium from L-selenocysteine. Selenocysteine lyase activity is however unsure in vivo. This is Cysteine desulfurase from Escherichia coli O139:H28 (strain E24377A / ETEC).